We begin with the raw amino-acid sequence, 232 residues long: 5'-methylthioadenosine/S-adenosylhomocysteine nucleosidase (232 aa).

The Proton acceptor role is filled by Glu-12. Residues Gly-78, Ile-152, and 173 to 174 each bind substrate; that span reads ME. Catalysis depends on Asp-197, which acts as the Proton donor.

Belongs to the PNP/UDP phosphorylase family. MtnN subfamily. In terms of assembly, homodimer.

The catalysed reaction is S-adenosyl-L-homocysteine + H2O = S-(5-deoxy-D-ribos-5-yl)-L-homocysteine + adenine. It catalyses the reaction S-methyl-5'-thioadenosine + H2O = 5-(methylsulfanyl)-D-ribose + adenine. The enzyme catalyses 5'-deoxyadenosine + H2O = 5-deoxy-D-ribose + adenine. Its pathway is amino-acid biosynthesis; L-methionine biosynthesis via salvage pathway; S-methyl-5-thio-alpha-D-ribose 1-phosphate from S-methyl-5'-thioadenosine (hydrolase route): step 1/2. In terms of biological role, catalyzes the irreversible cleavage of the glycosidic bond in both 5'-methylthioadenosine (MTA) and S-adenosylhomocysteine (SAH/AdoHcy) to adenine and the corresponding thioribose, 5'-methylthioribose and S-ribosylhomocysteine, respectively. Also cleaves 5'-deoxyadenosine, a toxic by-product of radical S-adenosylmethionine (SAM) enzymes, into 5-deoxyribose and adenine. Thus, is required for in vivo function of the radical SAM enzymes biotin synthase and lipoic acid synthase, that are inhibited by 5'-deoxyadenosine accumulation. The chain is 5'-methylthioadenosine/S-adenosylhomocysteine nucleosidase from Salmonella paratyphi B (strain ATCC BAA-1250 / SPB7).